An 81-amino-acid chain; its full sequence is Photosystem I iron-sulfur center (81 aa).

4Fe-4S ferredoxin-type domains are found at residues 2-31 and 39-68; these read SHTV…MVPW and IASS…IRVY. Positions 11, 14, 17, 21, 48, 51, 54, and 58 each coordinate [4Fe-4S] cluster.

In terms of assembly, the cyanobacterial PSI reaction center is composed of one copy each of PsaA,B,C,D,E,F,I,J,K,L,M and X, and forms trimeric complexes. [4Fe-4S] cluster serves as cofactor.

It localises to the cellular thylakoid membrane. The enzyme catalyses reduced [plastocyanin] + hnu + oxidized [2Fe-2S]-[ferredoxin] = oxidized [plastocyanin] + reduced [2Fe-2S]-[ferredoxin]. Functionally, apoprotein for the two 4Fe-4S centers FA and FB of photosystem I (PSI); essential for photochemical activity. FB is the terminal electron acceptor of PSI, donating electrons to ferredoxin. The C-terminus interacts with PsaA/B/D and helps assemble the protein into the PSI complex. Required for binding of PsaD and PsaE to PSI. PSI is a plastocyanin/cytochrome c6-ferredoxin oxidoreductase, converting photonic excitation into a charge separation, which transfers an electron from the donor P700 chlorophyll pair to the spectroscopically characterized acceptors A0, A1, FX, FA and FB in turn. The chain is Photosystem I iron-sulfur center from Microchaete diplosiphon (Fremyella diplosiphon).